Here is a 375-residue protein sequence, read N- to C-terminus: Putative serine protease 47 (375 aa).

A signal peptide spans 1–23 (MGYCQGVSQVAVVLLMFPKEKEA). The interval 41 to 60 (DGQLPMGPHSRASQVAPETT) is disordered. The segment covering 51-60 (RASQVAPETT) has biased composition (polar residues). Residues 81–323 (IYGGRDAAAG…FINWIDEIMR (243 aa)) enclose the Peptidase S1 domain. A disulfide bridge connects residues Cys106 and Cys122. Catalysis depends on charge relay system residues His121 and Asp172. N-linked (GlcNAc...) asparagine glycans are attached at residues Asn183 and Asn203. Cys206 and Cys281 form a disulfide bridge. Residue Ser275 is the Charge relay system of the active site.

It belongs to the peptidase S1 family.

It localises to the secreted. This Homo sapiens (Human) protein is Putative serine protease 47 (PRSS47P).